A 233-amino-acid polypeptide reads, in one-letter code: Pyridoxal phosphate homeostasis protein (233 aa).

Lysine 36 is modified (N6-(pyridoxal phosphate)lysine).

The protein belongs to the pyridoxal phosphate-binding protein YggS/PROSC family.

Its function is as follows. Pyridoxal 5'-phosphate (PLP)-binding protein, which is involved in PLP homeostasis. This chain is Pyridoxal phosphate homeostasis protein, found in Vibrio alginolyticus.